Reading from the N-terminus, the 158-residue chain is Snaclec stejaggregin-A subunit alpha (158 aa).

The signal sequence occupies residues methionine 1–alanine 23. 3 disulfides stabilise this stretch: cysteine 27–cysteine 38, cysteine 55–cysteine 152, and cysteine 127–cysteine 144. The C-type lectin domain occupies tyrosine 34 to lysine 153.

It belongs to the snaclec family. Heteromultimer; disulfide-linked. Expressed by the venom gland.

It is found in the secreted. In terms of biological role, interferes with one step of hemostasis (modulation of platelet aggregation, or coagulation cascade, for example). The polypeptide is Snaclec stejaggregin-A subunit alpha (Trimeresurus stejnegeri (Chinese green tree viper)).